A 189-amino-acid polypeptide reads, in one-letter code: Peptide deformylase (189 aa).

Cys-116 and His-159 together coordinate Fe cation. Glu-160 is an active-site residue. His-163 contacts Fe cation.

Belongs to the polypeptide deformylase family. Fe(2+) is required as a cofactor.

The catalysed reaction is N-terminal N-formyl-L-methionyl-[peptide] + H2O = N-terminal L-methionyl-[peptide] + formate. Functionally, removes the formyl group from the N-terminal Met of newly synthesized proteins. Requires at least a dipeptide for an efficient rate of reaction. N-terminal L-methionine is a prerequisite for activity but the enzyme has broad specificity at other positions. This chain is Peptide deformylase, found in Limosilactobacillus fermentum (strain NBRC 3956 / LMG 18251) (Lactobacillus fermentum).